The primary structure comprises 462 residues: tRNA modification GTPase MnmE (462 aa).

3 residues coordinate (6S)-5-formyl-5,6,7,8-tetrahydrofolate: Arg-27, Glu-89, and Arg-128. The TrmE-type G domain maps to 224–383; that stretch reads GLATAIVGRP…LEAQIAKLFF (160 aa). Asn-234 contributes to the K(+) binding site. GTP contacts are provided by residues 234 to 239, 253 to 259, and 278 to 281; these read NVGKSS, TDVAGTT, and DTAG. Mg(2+) is bound at residue Ser-238. Residues Thr-253, Val-255, and Thr-258 each coordinate K(+). Residue Thr-259 participates in Mg(2+) binding. Lys-462 provides a ligand contact to (6S)-5-formyl-5,6,7,8-tetrahydrofolate.

Belongs to the TRAFAC class TrmE-Era-EngA-EngB-Septin-like GTPase superfamily. TrmE GTPase family. Homodimer. Heterotetramer of two MnmE and two MnmG subunits. K(+) serves as cofactor.

The protein localises to the cytoplasm. In terms of biological role, exhibits a very high intrinsic GTPase hydrolysis rate. Involved in the addition of a carboxymethylaminomethyl (cmnm) group at the wobble position (U34) of certain tRNAs, forming tRNA-cmnm(5)s(2)U34. The protein is tRNA modification GTPase MnmE of Latilactobacillus sakei subsp. sakei (strain 23K) (Lactobacillus sakei subsp. sakei).